The primary structure comprises 326 residues: Lipopolysaccharide heptosyltransferase 1 (326 aa).

Residues Thr187, Thr188, Lys192, Glu222, and Met242 each coordinate ADP. The ADP-L-glycero-beta-D-manno-heptose site is built by Thr187, Thr188, Lys192, Glu222, Met242, Asp261, Thr262, Gly263, and His266. 2 residues coordinate ADP: Thr262 and Gly263.

Belongs to the glycosyltransferase 9 family. In terms of assembly, monomer.

The protein localises to the cell inner membrane. It carries out the reaction an alpha-Kdo-(2-&gt;4)-alpha-Kdo-(2-&gt;6)-lipid A + ADP-L-glycero-beta-D-manno-heptose = an L-alpha-D-Hep-(1-&gt;5)-[alpha-Kdo-(2-&gt;4)]-alpha-Kdo-(2-&gt;6)-lipid A + ADP + H(+). The catalysed reaction is alpha-Kdo-(2-&gt;4)-alpha-Kdo-(2-&gt;6)-lipid A (E. coli) + ADP-L-glycero-beta-D-manno-heptose = L-alpha-D-Hep-(1-&gt;5)-[alpha-Kdo-(2-&gt;4)]-alpha-Kdo-(2-&gt;6)-lipid A (E. coli) + ADP + H(+). It participates in bacterial outer membrane biogenesis; LPS core biosynthesis. With respect to regulation, inhibited by ADP-L-glycero-beta-D-gluco-2-deoxy-2-fluoro-heptose (ADP-2F-heptose), a non-cleavable analog of the substrate ADP-L-glycero-beta-D-manno-heptose. Functionally, glycosyltransferase involved in the biosynthesis of the core oligosaccharide region of lipopolysaccharide (LPS). Catalyzes the addition of the first heptose unit to one 3-deoxy-D-manno-octulosonic acid (Kdo) residue of the Kdo2-lipid A module. This is Lipopolysaccharide heptosyltransferase 1 from Escherichia coli O18:K1:H7 (strain RS218 / NMEC).